Consider the following 346-residue polypeptide: N-acetyl-gamma-glutamyl-phosphate reductase (346 aa).

Residue cysteine 149 is part of the active site.

It belongs to the NAGSA dehydrogenase family. Type 1 subfamily.

It is found in the cytoplasm. It carries out the reaction N-acetyl-L-glutamate 5-semialdehyde + phosphate + NADP(+) = N-acetyl-L-glutamyl 5-phosphate + NADPH + H(+). The protein operates within amino-acid biosynthesis; L-arginine biosynthesis; N(2)-acetyl-L-ornithine from L-glutamate: step 3/4. Catalyzes the NADPH-dependent reduction of N-acetyl-5-glutamyl phosphate to yield N-acetyl-L-glutamate 5-semialdehyde. This chain is N-acetyl-gamma-glutamyl-phosphate reductase, found in Pelobacter propionicus (strain DSM 2379 / NBRC 103807 / OttBd1).